A 398-amino-acid polypeptide reads, in one-letter code: Putative F-box/kelch-repeat protein At2g29780 (398 aa).

The segment at Met-1 to Arg-46 is disordered. Positions Lys-19–Asp-32 are enriched in basic and acidic residues. Positions Pro-43–Ser-90 constitute an F-box domain. 4 Kelch repeats span residues Lys-148 to Gly-195, Lys-196 to Thr-241, Val-243 to Asp-289, and Asp-295 to Leu-342.

The sequence is that of Putative F-box/kelch-repeat protein At2g29780 from Arabidopsis thaliana (Mouse-ear cress).